A 266-amino-acid polypeptide reads, in one-letter code: Non-structural maintenance of chromosomes element 1 homolog (266 aa).

Residues 1-102 (MQGSTRRMSV…SISKMATDFA (102 aa)) form an interaction with NSMCE3 region. The RING-type; atypical zinc-finger motif lies at 191–232 (CNICHSLLIQGQSCETCGIRMHLPCVAKYFQSNAEPRCPHCN). The tract at residues 245–266 (PEKERESGVSKSNKKSLRSRQH) is disordered. Position 251 is a phosphoserine (Ser251). Over residues 256–266 (SNKKSLRSRQH) the composition is skewed to basic residues.

The protein belongs to the NSE1 family. As to quaternary structure, component of the SMC5-SMC6 complex which consists at least of SMC5, SMC6, NSMCE2, NSMCE1, NSMCE4A or EID3 and NSMCE3. NSMCE1, NSMCE4A or EID3 and NSMCE3 probably form a subcomplex that bridges the head domains of the SMC5-SMC6 heterodimer. Interacts with NSMCE3. In terms of processing, ubiquitinated.

The protein localises to the nucleus. It is found in the chromosome. The protein resides in the telomere. The enzyme catalyses S-ubiquitinyl-[E2 ubiquitin-conjugating enzyme]-L-cysteine + [acceptor protein]-L-lysine = [E2 ubiquitin-conjugating enzyme]-L-cysteine + N(6)-ubiquitinyl-[acceptor protein]-L-lysine.. Its function is as follows. RING-type zinc finger-containing E3 ubiquitin ligase that assembles with melanoma antigen protein (MAGE) to catalyze the direct transfer of ubiquitin from E2 ubiquitin-conjugating enzyme to a specific substrate. Within MAGE-RING ubiquitin ligase complex, MAGE stimulates and specifies ubiquitin ligase activity likely through recruitment and/or stabilization of the E2 ubiquitin-conjugating enzyme at the E3:substrate complex. Involved in maintenance of genome integrity, DNA damage response and DNA repair. NSMCE3/MAGEG1 and NSMCE1 ubiquitin ligase are components of SMC5-SMC6 complex and may positively regulate homologous recombination-mediated DNA repair. The sequence is that of Non-structural maintenance of chromosomes element 1 homolog (NSMCE1) from Pongo abelii (Sumatran orangutan).